A 357-amino-acid chain; its full sequence is tRNA N6-adenosine threonylcarbamoyltransferase (357 aa).

Fe cation-binding residues include His-115 and His-119. Substrate-binding positions include 137-141, Asp-170, Gly-183, and Asn-281; that span reads LASGG. Asp-309 is a Fe cation binding site.

The protein belongs to the KAE1 / TsaD family. Fe(2+) is required as a cofactor.

The protein resides in the cytoplasm. It carries out the reaction L-threonylcarbamoyladenylate + adenosine(37) in tRNA = N(6)-L-threonylcarbamoyladenosine(37) in tRNA + AMP + H(+). Functionally, required for the formation of a threonylcarbamoyl group on adenosine at position 37 (t(6)A37) in tRNAs that read codons beginning with adenine. Is involved in the transfer of the threonylcarbamoyl moiety of threonylcarbamoyl-AMP (TC-AMP) to the N6 group of A37, together with TsaE and TsaB. TsaD likely plays a direct catalytic role in this reaction. In Bradyrhizobium diazoefficiens (strain JCM 10833 / BCRC 13528 / IAM 13628 / NBRC 14792 / USDA 110), this protein is tRNA N6-adenosine threonylcarbamoyltransferase.